We begin with the raw amino-acid sequence, 193 residues long: MARARQEGSSPEPVEGLARDSPRPFPLGRLMPSAVSCSLCEPGLPAAPAAPALLPAAYLCAPTAPPAVTAALGGPRWPGGHRSRPRGPRPDGPQPSLSPAQQHLESPVPSAPEALAGGPTQAAPGVRVEEEEWAREIGAQLRRMADDLNAQYERRRQEEQHRHRPSPWRVMYNLFMGLLPLPRDPGAPEMEPN.

Disordered regions lie at residues 1–31 (MARA…GRLM) and 71–131 (ALGG…VEEE). Residue S10 is modified to Phosphoserine. The short motif at 137–151 (IGAQLRRMADDLNAQ) is the BH3 element.

The protein belongs to the Bcl-2 family. As to quaternary structure, interacts with MCL1 and BCL2A1. Interacts with BCL2 and BCL2L1/BCL-XL. Interacts (via BH3 domain) with NOL3 (via CARD domain); this interaction prevents BBC3 association with BCL2 and results in CASP8 activation.

The protein resides in the mitochondrion. Its function is as follows. Essential mediator of p53/TP53-dependent and p53/TP53-independent apoptosis. Promotes partial unfolding of BCL2L1 and dissociation of BCL2L1 from p53/TP53, releasing the bound p53/TP53 to induce apoptosis. Regulates ER stress-induced neuronal apoptosis. This chain is Bcl-2-binding component 3 (Bbc3), found in Mus musculus (Mouse).